The sequence spans 436 residues: Chromosomal replication initiator protein DnaA (436 aa).

The interval 1 to 80 is domain I, interacts with DnaA modulators; it reads MSHEAVWQHV…QAPRFELRVV (80 aa). Positions 80–100 are domain II; the sequence is VPGVVVQEDIFQAAPAEAPRP. The interval 101 to 317 is domain III, AAA+ region; it reads KLNPKYTFEN…GALMRAIAFA (217 aa). Positions 145, 147, 148, and 149 each coordinate ATP. The interval 318-436 is domain IV, binds dsDNA; sequence SLNGVELTRA…LLRTLREACT (119 aa).

This sequence belongs to the DnaA family. In terms of assembly, oligomerizes as a right-handed, spiral filament on DNA at oriC.

It localises to the cytoplasm. Plays an essential role in the initiation and regulation of chromosomal replication. ATP-DnaA binds to the origin of replication (oriC) to initiate formation of the DNA replication initiation complex once per cell cycle. Binds the DnaA box (a 9 base pair repeat at the origin) and separates the double-stranded (ds)DNA. Forms a right-handed helical filament on oriC DNA; dsDNA binds to the exterior of the filament while single-stranded (ss)DNA is stabiized in the filament's interior. The ATP-DnaA-oriC complex binds and stabilizes one strand of the AT-rich DNA unwinding element (DUE), permitting loading of DNA polymerase. After initiation quickly degrades to an ADP-DnaA complex that is not apt for DNA replication. Binds acidic phospholipids. This chain is Chromosomal replication initiator protein DnaA, found in Thermus thermophilus (strain ATCC BAA-163 / DSM 7039 / HB27).